Consider the following 194-residue polypeptide: Putative manganese efflux pump MntP (194 aa).

A run of 6 helical transmembrane segments spans residues 3–23 (PFSIVLIGFAMSTDAFAAAIG), 37–57 (LRAGLIFGCIEAITPVIGWLL), 69–89 (DHWIAFVLLGALGTHMIVAGL), 110–132 (LGLATTGFATSIDAMAVGVSLAF), 147–167 (CTFSMVTAGVMLGRALGNLIG), and 172–192 (MLGGLILVIVGSVILYEHLSG).

Belongs to the MntP (TC 9.B.29) family.

The protein localises to the cell inner membrane. Probably functions as a manganese efflux pump. The protein is Putative manganese efflux pump MntP of Xanthomonas axonopodis pv. citri (strain 306).